We begin with the raw amino-acid sequence, 622 residues long: Mitochondrial distribution and morphology protein 34 (622 aa).

The SMP-LTD domain maps to 1–204 (MSFKVNWNSL…LPTLIHQLSL (204 aa)). 2 disordered regions span residues 362-399 (YSNK…PSEL) and 568-592 (FDGG…TRNE). Residues 370–384 (KPKRRRIKVHKKNKS) are compositionally biased toward basic residues. Residues 390 to 399 (TTTTSKPSEL) show a composition bias toward polar residues. The segment covering 571–583 (GKNNNTNDNNSKN) has biased composition (low complexity).

Belongs to the MDM34 family. As to quaternary structure, component of the ER-mitochondria encounter structure (ERMES) or MDM complex, composed of MMM1, MDM10, MDM12 and MDM34.

The protein resides in the mitochondrion outer membrane. Functionally, component of the ERMES/MDM complex, which serves as a molecular tether to connect the endoplasmic reticulum (ER) and mitochondria. Components of this complex are involved in the control of mitochondrial shape and protein biogenesis, and function in nonvesicular lipid trafficking between the ER and mitochondria. MDM34 is required for the interaction of the ER-resident membrane protein MMM1 and the outer mitochondrial membrane-resident beta-barrel protein MDM10. The chain is Mitochondrial distribution and morphology protein 34 from Candida dubliniensis (strain CD36 / ATCC MYA-646 / CBS 7987 / NCPF 3949 / NRRL Y-17841) (Yeast).